A 467-amino-acid polypeptide reads, in one-letter code: Spermatogenesis- and oogenesis-specific basic helix-loop-helix-containing protein 2 (467 aa).

The region spanning 200 to 251 (QASFLHSTKEKLRRERIKSCCEQLRTLLPYVKGRKSDVASVIEATVDYVKQV) is the bHLH domain. Low complexity predominate over residues 443–453 (ASASDHQASQP). Residues 443–467 (ASASDHQASQPPALPSPQPHDSSYF) form a disordered region.

As to quaternary structure, forms both hetero- and homodimers with SOHLH1. As to expression, preferentially expressed in the adult ovary and testis. Expressed in the majority of spermatogonia in adult animals, but not in the most undifferentiated spermatogonial population.

It is found in the nucleus. It localises to the cytoplasm. Transcription regulator of both male and female germline differentiation. Suppresses genes involved in spermatogonial stem cells maintenance, and induces genes important for spermatogonial differentiation. Coordinates oocyte differentiation without affecting meiosis I. This chain is Spermatogenesis- and oogenesis-specific basic helix-loop-helix-containing protein 2 (Sohlh2), found in Mus musculus (Mouse).